A 214-amino-acid chain; its full sequence is ATP phosphoribosyltransferase (214 aa).

This sequence belongs to the ATP phosphoribosyltransferase family. Short subfamily. In terms of assembly, heteromultimer composed of HisG and HisZ subunits.

It is found in the cytoplasm. The catalysed reaction is 1-(5-phospho-beta-D-ribosyl)-ATP + diphosphate = 5-phospho-alpha-D-ribose 1-diphosphate + ATP. It participates in amino-acid biosynthesis; L-histidine biosynthesis; L-histidine from 5-phospho-alpha-D-ribose 1-diphosphate: step 1/9. Functionally, catalyzes the condensation of ATP and 5-phosphoribose 1-diphosphate to form N'-(5'-phosphoribosyl)-ATP (PR-ATP). Has a crucial role in the pathway because the rate of histidine biosynthesis seems to be controlled primarily by regulation of HisG enzymatic activity. This is ATP phosphoribosyltransferase from Marinomonas sp. (strain MWYL1).